The following is a 368-amino-acid chain: Probable magnesium transporter NIPA3 (368 aa).

The Extracellular portion of the chain corresponds to 1-18 (MASLSGSWRDAYKGMSSD). Residues 19 to 39 (NIKGLVLALSSSLFIGASFIV) form a helical membrane-spanning segment. Topologically, residues 40 to 66 (KKKGLKRAGASGLRAGSGGYSYLLEPL) are cytoplasmic. A helical transmembrane segment spans residues 67–87 (WWVGMITMIVGEIANFAAYAF). Topologically, residues 88-90 (APA) are extracellular. Residues 91–111 (ILVTPLGALSIIISAALAHVI) form a helical membrane-spanning segment. At 112-115 (LHEK) the chain is on the cytoplasmic side. A helical membrane pass occupies residues 116–136 (LHTFGLLGCVLCVVGSITIVL). The Extracellular segment spans residues 137-157 (HAPQEQEIDSVLQVWNLATEP). Residues 158–178 (AFLLYAAAVVGAAIILIVQFV) traverse the membrane as a helical segment. The Cytoplasmic portion of the chain corresponds to 179–189 (PQYGQSHVMVY). A helical transmembrane segment spans residues 190–210 (IGVCSLVGSLSVMSVKALGIA). At 211–220 (LKLTFSGMNQ) the chain is on the extracellular side. A helical membrane pass occupies residues 221–241 (LIYPQTWVFTLIVLTCVITQM). Topologically, residues 242–255 (NYLNKALDTFNTAV) are cytoplasmic. A helical transmembrane segment spans residues 256-276 (VSPIYYVMFTSLTILASVIMF). Residues 277–283 (KDWDRQD) are Extracellular-facing. The chain crosses the membrane as a helical span at residues 284 to 304 (GTQIVTELCGFVTILSGTFLL). Residues 305–368 (HKTKDMVDGS…ILPQDGPEAV (64 aa)) are Cytoplasmic-facing.

This sequence belongs to the NIPA (TC 2.A.7) family. As to quaternary structure, homodimer.

It localises to the cell membrane. The protein localises to the early endosome. In terms of biological role, acts as a Mg(2+) transporter. Can also transport other divalent cations such as Fe(2+), Sr(2+), Ba(2+), Mn(2+) and Co(2+) but to a much less extent than Mg(2+). The chain is Probable magnesium transporter NIPA3 from Arabidopsis thaliana (Mouse-ear cress).